The chain runs to 94 residues: Integration host factor subunit beta (94 aa).

Belongs to the bacterial histone-like protein family. Heterodimer of an alpha and a beta chain.

This protein is one of the two subunits of integration host factor, a specific DNA-binding protein that functions in genetic recombination as well as in transcriptional and translational control. In Nitrosospira multiformis (strain ATCC 25196 / NCIMB 11849 / C 71), this protein is Integration host factor subunit beta.